The chain runs to 365 residues: 3-isopropylmalate dehydrogenase (365 aa).

80 to 93 (GPKWADNTGDQRPE) serves as a coordination point for NAD(+). Substrate-binding residues include Arg-100, Arg-110, Arg-138, and Asp-223. Mg(2+) is bound by residues Asp-223, Asp-247, and Asp-251. NAD(+) is bound at residue 280-292 (GSAPDIAGQDVAN). Residues 337 to 365 (NEEDASTSAFGREVATRAADSVPQNAPTP) form a disordered region.

Belongs to the isocitrate and isopropylmalate dehydrogenases family. LeuB type 1 subfamily. In terms of assembly, homodimer. Requires Mg(2+) as cofactor. It depends on Mn(2+) as a cofactor.

It is found in the cytoplasm. The enzyme catalyses (2R,3S)-3-isopropylmalate + NAD(+) = 4-methyl-2-oxopentanoate + CO2 + NADH. The protein operates within amino-acid biosynthesis; L-leucine biosynthesis; L-leucine from 3-methyl-2-oxobutanoate: step 3/4. Functionally, catalyzes the oxidation of 3-carboxy-2-hydroxy-4-methylpentanoate (3-isopropylmalate) to 3-carboxy-4-methyl-2-oxopentanoate. The product decarboxylates to 4-methyl-2 oxopentanoate. This is 3-isopropylmalate dehydrogenase from Salinibacter ruber (strain DSM 13855 / M31).